Consider the following 215-residue polypeptide: MKKFTQVTGVVAPIDRANVDTDMIIPKQFLKSIKRSGFGPNLFDELRYLDEGQPDADCSKRPINPDFVLNQPRYQGASIMLARRNFGCGSSREHAPWALDDYGFRAVIAPSFADIFFNNCFKNGLLPIVLEEKEVDKLFEETLATEGYQLTVDLERKKVVKPDGTELSFEVDEFRQHCLLKGLDEIGVTLEDRDAIGAYEERRKAEAPWMFLGVQ.

It belongs to the LeuD family. LeuD type 1 subfamily. In terms of assembly, heterodimer of LeuC and LeuD.

It carries out the reaction (2R,3S)-3-isopropylmalate = (2S)-2-isopropylmalate. Its pathway is amino-acid biosynthesis; L-leucine biosynthesis; L-leucine from 3-methyl-2-oxobutanoate: step 2/4. Catalyzes the isomerization between 2-isopropylmalate and 3-isopropylmalate, via the formation of 2-isopropylmaleate. This chain is 3-isopropylmalate dehydratase small subunit, found in Hahella chejuensis (strain KCTC 2396).